The sequence spans 931 residues: Netrin receptor UNC5C (931 aa).

Residues 1–39 (MGKGLEGTAARCGLGMGYLLHSVVLPALAVLGASRPGSA) form the signal peptide. Over 40-380 (AQDDDFFHEL…APDSDDVALY (341 aa)) the chain is Extracellular. Positions 62-159 (PHFLIEPEEA…AGTTKSRKAY (98 aa)) constitute an Ig-like domain. Disulfide bonds link cysteine 83/cysteine 144, cysteine 95/cysteine 142, cysteine 188/cysteine 239, cysteine 272/cysteine 309, cysteine 276/cysteine 313, cysteine 287/cysteine 299, cysteine 328/cysteine 362, cysteine 332/cysteine 367, and cysteine 340/cysteine 352. The Ig-like C2-type domain maps to 161 to 256 (RIAYLRKTFE…KRKSTTATVI (96 aa)). N-linked (GlcNAc...) asparagine glycosylation is present at asparagine 236. TSP type-1 domains follow at residues 260 to 314 (NGGW…TLCP) and 316 to 368 (DGKW…GLCM). Residue asparagine 361 is glycosylated (N-linked (GlcNAc...) asparagine). Residues 381–401 (VGIVIAVIVCLAISVVVALFV) traverse the membrane as a helical segment. Residues 402–931 (YRKNHRDFES…VVSLAAEGNY (530 aa)) lie on the Cytoplasmic side of the membrane. The ZU5 domain occupies 530–664 (CTAFGTFNSL…EACHILTETL (135 aa)). One can recognise a Death domain in the interval 850-929 (QKLCSSLDAP…ETVVSLAAEG (80 aa)).

Belongs to the unc-5 family. In terms of tissue distribution, restricted to proprioceptive neurons.

The protein localises to the cell membrane. It is found in the cell surface. Its subcellular location is the synapse. The protein resides in the synaptosome. It localises to the cell projection. The protein localises to the axon. It is found in the dendrite. Its subcellular location is the growth cone. The protein resides in the lamellipodium. It localises to the filopodium. In terms of biological role, receptor for netrin required for axon guidance. Mediates axon repulsion of neuronal growth cones in the developing nervous system upon ligand binding. Involved in dorsal root ganglion axon projection towards the spinal cord. In Gallus gallus (Chicken), this protein is Netrin receptor UNC5C (UNC5C).